A 1044-amino-acid chain; its full sequence is Probable translation initiation factor IF-2 (1044 aa).

The DOD-type homing endonuclease domain occupies 173–265 (FAGTIFGREN…LSLILLRLGI (93 aa)). The tr-type G domain occupies 451–668 (TTETHNFIAN…LIAGLSQKYL (218 aa)). GTP is bound by residues 524–528 (DTPGH) and 578–581 (NKID).

It belongs to the TRAFAC class translation factor GTPase superfamily. Classic translation factor GTPase family. IF-2 subfamily. This protein undergoes a protein self splicing that involves a post-translational excision of the intervening region (intein) followed by peptide ligation.

Function in general translation initiation by promoting the binding of the formylmethionine-tRNA to ribosomes. Seems to function along with eIF-2. In Pyrococcus horikoshii (strain ATCC 700860 / DSM 12428 / JCM 9974 / NBRC 100139 / OT-3), this protein is Probable translation initiation factor IF-2 (infB).